The following is a 447-amino-acid chain: MLKKQSAGLVLWGAIIFVGWNALLLLFFWTRPAPGRLPSDSALGDDPASLTREVIHLAEDAEAELERQRGLLQQIKEHYSLWRQRWRVPTVAPPAWPRVPGTPSPAVIPILVIACDRSTVRRCLDKLLHYRPSAEHFPIIVSQDCGHEETAQVIASYGTAVTHIRQPDLSNIAVQPDHRKFQGYYKIARHYRWALGQIFNKFKFPAAVVVEDDLEVAPDFFEYFQATYPLLKADPSLWCVSAWNDNGKEQMVDSSKPELLYRTDFFPGLGWLLLADLWAELEPKWPKAFWDDWMRRPEQRKGRACIRPEISRTMTFGRKGVSHGQFFDQHLKFIKLNQQFVPFTQLDLSYLQREAYDRDFLAQVYGAPQLQVEKVRTNDRKELGEVRVQYTSRDSFKAFAKALGVMDDLKSGVPRAGYRGIVTFQFRGRRVHLAPPETWNGYDPSWN.

At 1–6 (MLKKQS) the chain is on the cytoplasmic side. Residues 7-29 (AGLVLWGAIIFVGWNALLLLFFW) traverse the membrane as a helical; Signal-anchor for type II membrane protein segment. At 30–447 (TRPAPGRLPS…TWNGYDPSWN (418 aa)) the chain is on the lumenal side. Cysteines 115 and 145 form a disulfide. Substrate is bound by residues Arg-117, Asp-144, His-190, and Asp-212. Mn(2+) is bound at residue Asp-213. An intrachain disulfide couples Cys-239 to Cys-305. Catalysis depends on Asp-291, which acts as the Proton acceptor. Ser-322 provides a ligand contact to substrate.

It belongs to the glycosyltransferase 13 family. As to quaternary structure, interacts with MGAT4D. Interacts with BRI3. Mn(2+) serves as cofactor. Appears to be present in all tissues.

It localises to the golgi apparatus membrane. Its subcellular location is the cytoplasm. The protein resides in the perinuclear region. It carries out the reaction N(4)-(alpha-D-Man-(1-&gt;3)-[alpha-D-Man-(1-&gt;3)-[alpha-D-Man-(1-&gt;6)]-alpha-D-Man-(1-&gt;6)]-beta-D-Man-(1-&gt;4)-beta-D-GlcNAc-(1-&gt;4)-beta-D-GlcNAc)-L-asparaginyl-[protein] (N-glucan mannose isomer 5A1,2) + UDP-N-acetyl-alpha-D-glucosamine = N(4)-{beta-D-GlcNAc-(1-&gt;2)-alpha-D-Man-(1-&gt;3)-[alpha-D-Man-(1-&gt;3)-[alpha-D-Man-(1-&gt;6)]-alpha-D-Man-(1-&gt;6)]-beta-D-Man-(1-&gt;4)-beta-D-GlcNAc-(1-&gt;4)-beta-D-GlcNAc}-L-asparaginyl-[protein] + UDP + H(+). It participates in protein modification; protein glycosylation. Functionally, initiates complex N-linked carbohydrate formation. Essential for the conversion of high-mannose to hybrid and complex N-glycans. This chain is Alpha-1,3-mannosyl-glycoprotein 2-beta-N-acetylglucosaminyltransferase (Mgat1), found in Rattus norvegicus (Rat).